A 652-amino-acid polypeptide reads, in one-letter code: Zinc finger protein 503 (652 aa).

Over residues 1–11 (MSTAPSLSALR) the composition is skewed to polar residues. The tract at residues 1-72 (MSTAPSLSAL…HAVPPSDPLR (72 aa)) is disordered. Positions 16–32 (SGGGGGGGGGGGSGGGS) are enriched in gly residues. At Ser-107 the chain carries Phosphoserine. Disordered stretches follow at residues 126 to 283 (SQIG…GVPA) and 296 to 338 (INVD…SSVL). Positions 135 to 144 (PSSKLSSVAS) are enriched in low complexity. 2 stretches are compositionally biased toward gly residues: residues 145 to 157 (NGGG…NGAG) and 194 to 209 (GGGG…GGGV). Lys-213 bears the N6-acetyllysine mark. Over residues 221 to 230 (ATCQPFTPRT) the composition is skewed to polar residues. Positions 231–244 (GSPSSSASACSPGG) are enriched in low complexity. Residues Ser-235 and Ser-241 each carry the phosphoserine modification. A compositionally biased stretch (basic and acidic residues) spans 254–263 (EGKDDKKDPE). Over residues 264-283 (AGGGGSSKGSGGASADGVPA) the composition is skewed to gly residues. Positions 314 to 336 (GSDCGGSSSSSSGSGPSAPTSSS) are enriched in low complexity. A C2H2-type zinc finger spans residues 520 to 548 (HICNWVSANGPCDKRFATSEELLSHLRTH). The residue at position 642 (Arg-642) is an Omega-N-methylarginine.

The protein belongs to the Elbow/Noc family.

It is found in the nucleus. May function as a transcriptional repressor. This Mus musculus (Mouse) protein is Zinc finger protein 503 (Znf503).